The primary structure comprises 522 residues: Leucine-rich repeat transmembrane neuronal protein 1 (522 aa).

A signal peptide spans 1 to 34; the sequence is MDFLLLGLCLYWLLRRPSGVVLCLLGACFQMLPA. In terms of domain architecture, LRRNT spans 35–63; that stretch reads APSGCPQLCRCEGRLLYCEALNLTEAPHN. The Extracellular portion of the chain corresponds to 35 to 427; sequence APSGCPQLCR…HAENAVQIHK (393 aa). N-linked (GlcNAc...) asparagine glycosylation is found at Asn56 and Asn63. LRR repeat units lie at residues 64–87, 89–111, 112–135, 137–159, 161–183, 184–207, 209–231, 233–255, 256–278, and 279–302; these read LSGL…QFTG, MQLT…AFQK, LRRV…TFRP, PNLR…LFHG, RKLT…IFQD, CRSL…SFAG, FKLT…HFPR, ISLH…LDWV, WNLE…VFET, and VPHL…ILNS. Asn130 carries an N-linked (GlcNAc...) asparagine glycan. The 52-residue stretch at 314–365 folds into the LRRCT domain; it reads NLWDCGRNVCALASWLNNFQGRYDGNLQCASPEYAQGEDVLDAVYAFHLCED. Asn380 carries an N-linked (GlcNAc...) asparagine glycan. Residues 382-401 form a disordered region; it reads SDLGPPASSATTLADGGEGQ. A helical transmembrane segment spans residues 428 to 448; the sequence is VVTGTMALIFSFLIVVLVLYV. The Cytoplasmic segment spans residues 449-522; it reads SWKCFPASLR…HQQPARECEV (74 aa).

This sequence belongs to the LRRTM family. In terms of tissue distribution, predominantly expressed in forebrain regions including thalamus and cerebral cortex.

It is found in the cell membrane. Its subcellular location is the postsynaptic cell membrane. Its function is as follows. Exhibits strong synaptogenic activity, restricted to excitatory presynaptic differentiation, acting at both pre- and postsynaptic level. This Homo sapiens (Human) protein is Leucine-rich repeat transmembrane neuronal protein 1 (LRRTM1).